The sequence spans 346 residues: Fe(3+) ions import ATP-binding protein FbpC 1 (346 aa).

Residues leucine 5–isoleucine 235 enclose the ABC transporter domain. Residue glycine 37–threonine 44 coordinates ATP.

The protein belongs to the ABC transporter superfamily. Fe(3+) ion importer (TC 3.A.1.10) family. In terms of assembly, the complex is composed of two ATP-binding proteins (FbpC), two transmembrane proteins (FbpB) and a solute-binding protein (FbpA).

The protein resides in the cell membrane. The catalysed reaction is Fe(3+)(out) + ATP + H2O = Fe(3+)(in) + ADP + phosphate + H(+). Functionally, part of the ABC transporter complex FbpABC involved in Fe(3+) ions import. Responsible for energy coupling to the transport system. The chain is Fe(3+) ions import ATP-binding protein FbpC 1 from Rhodococcus jostii (strain RHA1).